Here is a 457-residue protein sequence, read N- to C-terminus: Argininosuccinate lyase (457 aa).

Belongs to the lyase 1 family. Argininosuccinate lyase subfamily.

It localises to the cytoplasm. The enzyme catalyses 2-(N(omega)-L-arginino)succinate = fumarate + L-arginine. Its pathway is amino-acid biosynthesis; L-arginine biosynthesis; L-arginine from L-ornithine and carbamoyl phosphate: step 3/3. The protein is Argininosuccinate lyase of Escherichia coli O1:K1 / APEC.